Reading from the N-terminus, the 621-residue chain is Phosphoenolpyruvate carboxykinase [GTP] (621 aa).

Residues arginine 83 and 217-219 (YGG) each bind substrate. Positions 226 and 245 each coordinate Mn(2+). Substrate is bound at residue serine 267. 268–273 (MCGKTS) lines the GTP pocket. The active site involves cysteine 269. Aspartate 286 provides a ligand contact to Mn(2+). A substrate-binding site is contributed by 381–383 (NAR). GTP-binding residues include arginine 383 and arginine 415.

It belongs to the phosphoenolpyruvate carboxykinase [GTP] family. Mn(2+) is required as a cofactor.

It is found in the cytoplasm. It carries out the reaction oxaloacetate + GTP = phosphoenolpyruvate + GDP + CO2. It participates in carbohydrate biosynthesis; gluconeogenesis. Catalyzes the conversion of oxaloacetate (OAA) to phosphoenolpyruvate (PEP), the rate-limiting step in the metabolic pathway that produces glucose from lactate and other precursors derived from the citric acid cycle. In Pyrococcus horikoshii (strain ATCC 700860 / DSM 12428 / JCM 9974 / NBRC 100139 / OT-3), this protein is Phosphoenolpyruvate carboxykinase [GTP].